A 282-amino-acid polypeptide reads, in one-letter code: MSLFEALILGIVQGLTEFLPISSTAHLRIIPALAGWNDPGAAFTAIVQMGTLAAVLIYFRSDIVCIVKAVVDGLLKGKPLNTPDATMGWMIAAGTIPIVFFGLLFKDAIETTLRSLYWISAALIGLALILWLTEVRLKQRVAKHLPLKSMEEIGWKEALLIGVAQSIALIPGSSRSGTTITGGLLLNLSREAAARFSFLLSLPSVLAAALLQLYETRHSLLASPSELTNLLVATIAAGVVGYASIAFLITYLKEHSTSVFIIYRIVIGVAILGLIATGAIQP.

The next 7 helical transmembrane spans lie at 39-59, 85-105, 115-135, 153-173, 196-216, 230-250, and 260-280; these read PGAAFTAIVQMGTLAAVLIYF, ATMGWMIAAGTIPIVFFGLLF, SLYWISAALIGLALILWLTEV, IGWKEALLIGVAQSIALIPGS, FSFLLSLPSVLAAALLQLYET, LLVATIAAGVVGYASIAFLIT, and FIIYRIVIGVAILGLIATGAI.

It belongs to the UppP family.

It localises to the cell inner membrane. The catalysed reaction is di-trans,octa-cis-undecaprenyl diphosphate + H2O = di-trans,octa-cis-undecaprenyl phosphate + phosphate + H(+). In terms of biological role, catalyzes the dephosphorylation of undecaprenyl diphosphate (UPP). Confers resistance to bacitracin. In Chlorobium chlorochromatii (strain CaD3), this protein is Undecaprenyl-diphosphatase.